We begin with the raw amino-acid sequence, 78 residues long: Esculentin-2ISa (78 aa).

Positions 1-22 are cleaved as a signal peptide; sequence MFTLKKSLLLLFFLGTISLSVC. A propeptide spans 23–39 (removed in mature form); the sequence is KQERDADYEDKGEVEEV. Cysteine 72 and cysteine 78 are oxidised to a cystine.

Expressed by the skin glands.

It localises to the secreted. Functionally, has antimicrobial activity against Gram-negative bacterium E.coli ATCC 8739 (MIC=12.5 ug), against Gram positive bacteria S.aureus ATCC 6538 (MIC=3.1 ug), methicillin-resistant S.aureus ATCC 43300 (MIC=25 ug), B.subtilis ATCC 6633 (MIC=6.3 ug) and against fungus C.albicans ATCC 90028 (MIC=100 ug). The protein is Esculentin-2ISa of Odorrana ishikawae (Ishikawa's frog).